Here is a 225-residue protein sequence, read N- to C-terminus: uncharacterized protein (225 aa).

6 helical membrane passes run 25 to 45 (MMLA…IPFL), 57 to 77 (VFLI…ITVA), 83 to 103 (FIWD…NFAI), 109 to 129 (LYFH…SLAT), 135 to 155 (LLTT…FGYV), and 187 to 207 (IFAL…LIGV).

Its subcellular location is the cell membrane. This is an uncharacterized protein from Mycoplasma pneumoniae (strain ATCC 29342 / M129 / Subtype 1) (Mycoplasmoides pneumoniae).